Consider the following 589-residue polypeptide: PAN2-PAN3 deadenylation complex subunit pan3 (589 aa).

A disordered region spans residues 1-32 (MSVRKNSPASPKPTSRSRESSRSPSVTDLKDH). The segment at 34-63 (KAKRTLCRNILLYGSCKHSENGCAFRHDGP) adopts a C3H1-type zinc-finger fold. The PABPC-interacting motif-2 (PAM-2) motif lies at 74 to 94 (YSVKKKLNAASASFQPVRALP). The interval 201 to 457 (EASRQTISAL…NLELFLQNHI (257 aa)) is pseudokinase domain. ATP is bound by residues lysine 255 and 302–309 (DFYPCTTT). Positions 458–496 (ESFFPIMSSPYVECEKMERKISDAFQHGRFFNILCKIMF) form a coiled coil. The interval 497 to 589 (IIDNNRASRE…DNVYEMEINS (93 aa)) is knob domain.

Belongs to the protein kinase superfamily. PAN3 family. As to quaternary structure, homodimer. Forms a heterotrimer with a catalytic subunit pan2 to form the poly(A)-nuclease (PAN) deadenylation complex. Interacts (via PAM-2 motif) with poly(A)-binding protein pab1 (via PABC domain), conferring substrate specificity of the enzyme complex.

Its subcellular location is the cytoplasm. It localises to the nucleus. Its function is as follows. Regulatory subunit of the poly(A)-nuclease (PAN) deadenylation complex, one of two cytoplasmic mRNA deadenylases involved in mRNA turnover. PAN specifically shortens poly(A) tails of RNA and the activity is stimulated by poly(A)-binding protein pab1. PAN deadenylation is followed by rapid degradation of the shortened mRNA tails by the CCR4-NOT complex. Deadenylated mRNAs are then degraded by two alternative mechanisms, namely exosome-mediated 3'-5' exonucleolytic degradation, or deadenylation-dependent mRNA decaping and subsequent 5'-3' exonucleolytic degradation by xrn1. May also be involved in post-transcriptional maturation of mRNA poly(A) tails. ppk26/pan3 acts as a positive regulator for PAN activity, recruiting the catalytic subunit pan2 to mRNA via its interaction with RNA and with pab1. In Schizosaccharomyces pombe (strain 972 / ATCC 24843) (Fission yeast), this protein is PAN2-PAN3 deadenylation complex subunit pan3 (ppk26).